Reading from the N-terminus, the 110-residue chain is UPF0060 membrane protein MT2717 (110 aa).

Transmembrane regions (helical) follow at residues 6–26 (ILLF…VWQG), 32–52 (GWLW…FATL), 61–81 (VLAA…MALD), and 90–110 (VIGA…PRGH).

It belongs to the UPF0060 family.

The protein resides in the cell membrane. In Mycobacterium tuberculosis (strain CDC 1551 / Oshkosh), this protein is UPF0060 membrane protein MT2717.